The sequence spans 153 residues: Histone H2B.3 (153 aa).

Basic and acidic residues-rich tracts occupy residues 1 to 28 (MAPK…EKAP) and 36 to 53 (EKRL…EGRK). The interval 1–61 (MAPKAEKKPA…RKAGRKKAKK (61 aa)) is disordered. 2 positions are modified to N6-acetyllysine: K7 and K37. Residue K149 forms a Glycyl lysine isopeptide (Lys-Gly) (interchain with G-Cter in ubiquitin) linkage.

The protein belongs to the histone H2B family. The nucleosome is a histone octamer containing two molecules each of H2A, H2B, H3 and H4 assembled in one H3-H4 heterotetramer and two H2A-H2B heterodimers. The octamer wraps approximately 147 bp of DNA. Can be acetylated to form H2BK6ac and H2BK33ac. In terms of processing, monoubiquitinated by BRE1 to form H2BK143ub1 and deubiquitinated by UBP26. Required for heterochromatic histone H3 di- and trimethylation at H3K4me. May give a specific tag for epigenetic transcriptional activation.

Its subcellular location is the nucleus. The protein resides in the chromosome. In terms of biological role, core component of nucleosome. Nucleosomes wrap and compact DNA into chromatin, limiting DNA accessibility to the cellular machineries which require DNA as a template. Histones thereby play a central role in transcription regulation, DNA repair, DNA replication and chromosomal stability. DNA accessibility is regulated via a complex set of post-translational modifications of histones, also called histone code, and nucleosome remodeling. This Oryza sativa subsp. japonica (Rice) protein is Histone H2B.3 (H2B.3).